The following is a 61-amino-acid chain: Progonadoliberin-1 (61 aa).

Glutamine 1 carries the pyrrolidone carboxylic acid modification. Glycine 10 bears the Glycine amide mark.

The protein belongs to the GnRH family.

It is found in the secreted. Functionally, stimulates the secretion of gonadotropins; it stimulates the secretion of both luteinizing and follicle-stimulating hormones. This is Progonadoliberin-1 (GNRH1) from Ovis aries (Sheep).